Consider the following 212-residue polypeptide: Eukaryotic translation initiation factor 4E-4 (212 aa).

An intrachain disulfide couples C143 to C147.

The protein belongs to the eukaryotic initiation factor 4E family. As to quaternary structure, eIF4F is a multi-subunit complex, the composition of which varies with external and internal environmental conditions. It is composed of at least eIF4A, eIF4E and eIF4G. eIF4E is also known to interact with other partners. In terms of tissue distribution, enriched in somatic cells.

Functionally, recognizes and binds the 7-methylguanosine-containing mRNA cap during an early step in the initiation of protein synthesis and facilitates ribosome binding by inducing the unwinding of the mRNAs secondary structures. All 5 eIF4E proteins bind monomethyl cap structures. Only ife-1, ife-2 and ife-5 bind trimethyl cap structures which result from trans-splicing. Translation of trimethyl cap structure mRNAs may be regulated by intracellular redox state; disulfide bonds change the width and depth of the cap-binding cavity determining selectivity to mRNA caps. The polypeptide is Eukaryotic translation initiation factor 4E-4 (ife-4) (Caenorhabditis elegans).